The following is a 488-amino-acid chain: Glycogen synthase (488 aa).

ADP-alpha-D-glucose is bound at residue arginine 20.

The protein belongs to the glycosyltransferase 1 family. Bacterial/plant glycogen synthase subfamily.

The catalysed reaction is [(1-&gt;4)-alpha-D-glucosyl](n) + ADP-alpha-D-glucose = [(1-&gt;4)-alpha-D-glucosyl](n+1) + ADP + H(+). Its pathway is glycan biosynthesis; glycogen biosynthesis. Its function is as follows. Synthesizes alpha-1,4-glucan chains using ADP-glucose. In Chlorobaculum tepidum (strain ATCC 49652 / DSM 12025 / NBRC 103806 / TLS) (Chlorobium tepidum), this protein is Glycogen synthase.